The primary structure comprises 256 residues: Myb family transcription factor MPH1 (256 aa).

The HTH myb-type domain occupies 14–74 (RSEVPRMRWT…HLQMYRSGSS (61 aa)). A DNA-binding region (H-T-H motif) is located at residues 45-70 (PKRILQLMGVKGVSISHIKSHLQMYR).

As to expression, highly expressed in the pulvinus and stem nodes. Expressed in the plumule of germinating seeds, coleoptile, leaves, internodes, leave sheaths, spikes and roots.

The protein resides in the nucleus. Its function is as follows. Probable transcription factor involved in the regulation of plant height by elongating internode cell length. Involved in the positive regulation of grain yield. May be involved in the regulation of genes related to cell elongation and cell wall synthesis, which are associated with plant height and yield phenotypes. Plays a role in tolerance to cadmium stress. The chain is Myb family transcription factor MPH1 from Oryza sativa subsp. japonica (Rice).